Reading from the N-terminus, the 381-residue chain is Dof zinc finger protein 2 (381 aa).

Positions 19–81 are disordered; the sequence is MLMGANPNPN…ARPQKEKALN (63 aa). 2 stretches are compositionally biased toward low complexity: residues 23–32 and 40–59; these read ANPNPNGSSN and SAAS…AAGA. Residues 68–79 show a composition bias toward basic and acidic residues; it reads TERRARPQKEKA. Residues 80–134 form a Dof-type zinc finger; sequence LNCPRCNSTNTKFCYYNNYSLQQPRYFCKTCRRYWTEGGSLRNVPVGGGSRKNKR. Zn(2+)-binding residues include cysteine 82, cysteine 85, cysteine 107, and cysteine 110. Residues 329-349 are disordered; sequence AGDANSGGDHQYDHGKNQGGG.

The protein localises to the nucleus. Its function is as follows. Transcription factor that may transactivate seed storage protein genes in developing seeds. This is Dof zinc finger protein 2 from Oryza sativa subsp. japonica (Rice).